We begin with the raw amino-acid sequence, 276 residues long: Undecaprenyl-diphosphatase (276 aa).

Helical transmembrane passes span 48 to 68 (AANSFKVVIQLGSILAVAIVF), 92 to 112 (LTIAQIAVGLVPAAVLGFLFE), 119 to 139 (LFSVRTVAYGLIAGAVLMLIA), 155 to 175 (ITYKQAFCVGLFQCLALWPGF), 196 to 216 (ADFTFIMAIPIMAGASLLKLV), 229 to 249 (FFLVGFICAFVVALLVVKFFL), and 255 to 275 (IKLVPFAIYRVILGIILIMLV).

Belongs to the UppP family.

It localises to the cell membrane. It catalyses the reaction di-trans,octa-cis-undecaprenyl diphosphate + H2O = di-trans,octa-cis-undecaprenyl phosphate + phosphate + H(+). Catalyzes the dephosphorylation of undecaprenyl diphosphate (UPP). Confers resistance to bacitracin. This chain is Undecaprenyl-diphosphatase, found in Bacillus velezensis (strain DSM 23117 / BGSC 10A6 / LMG 26770 / FZB42) (Bacillus amyloliquefaciens subsp. plantarum).